The primary structure comprises 324 residues: dITP/XTP pyrophosphatase (324 aa).

A unknown region spans residues 1 to 126 (MTKSIFEYKD…SDNKSDFGDV (126 aa)). An NTP pyrophosphatase region spans residues 127-324 (LLIATRNEGK…EVFPAWQNKQ (198 aa)). Residue 131-136 (TRNEGK) coordinates substrate. The active-site Proton acceptor is D193. D193 is a Mg(2+) binding site. Residues S194, 277–280 (FGYD), K300, and 305–306 (HR) each bind substrate.

It belongs to the HAM1 NTPase family. In terms of assembly, homodimer. Requires Mg(2+) as cofactor.

It catalyses the reaction XTP + H2O = XMP + diphosphate + H(+). The enzyme catalyses dITP + H2O = dIMP + diphosphate + H(+). It carries out the reaction ITP + H2O = IMP + diphosphate + H(+). In terms of biological role, pyrophosphatase that catalyzes the hydrolysis of nucleoside triphosphates to their monophosphate derivatives, with a high preference for the non-canonical purine nucleotides XTP (xanthosine triphosphate), dITP (deoxyinosine triphosphate) and ITP. Seems to function as a house-cleaning enzyme that removes non-canonical purine nucleotides from the nucleotide pool, thus preventing their incorporation into DNA/RNA and avoiding chromosomal lesions. This Streptococcus thermophilus (strain ATCC BAA-250 / LMG 18311) protein is dITP/XTP pyrophosphatase.